A 216-amino-acid polypeptide reads, in one-letter code: Adenylate kinase (216 aa).

10–15 (GAGKGT) is an ATP binding site. The interval 30–59 (STGDMLRAAVNAGTEVGKRAKAVMDAGKLV) is NMP. AMP contacts are provided by residues Thr31, Arg36, 57–59 (KLV), 85–88 (GFPR), and Gln92. The interval 126–163 (GRYTCAQCGTVYHDTDKVPVEEGVCDKCGSTHFKRRPD) is LID. Residue Arg127 coordinates ATP. The Zn(2+) site is built by Cys130 and Cys133. 136–137 (VY) serves as a coordination point for ATP. Positions 150 and 153 each coordinate Zn(2+). AMP is bound by residues Arg160 and Arg172. Ala200 is a binding site for ATP.

The protein belongs to the adenylate kinase family. In terms of assembly, monomer.

It is found in the cytoplasm. It carries out the reaction AMP + ATP = 2 ADP. It functions in the pathway purine metabolism; AMP biosynthesis via salvage pathway; AMP from ADP: step 1/1. Its function is as follows. Catalyzes the reversible transfer of the terminal phosphate group between ATP and AMP. Plays an important role in cellular energy homeostasis and in adenine nucleotide metabolism. This Rhizobium etli (strain ATCC 51251 / DSM 11541 / JCM 21823 / NBRC 15573 / CFN 42) protein is Adenylate kinase.